The primary structure comprises 192 residues: Putative manganese efflux pump MntP (192 aa).

6 helical membrane passes run 3–23, 36–56, 65–85, 112–132, 136–156, and 171–191; these read FSAILLLALGLAMDATAVAAA, VLLVAGFFGGAQALMPVIGWL, VQAWDHWIAFVLLAFIGGKML, FVLAIATSIDALAVGITLPML, FAISVVTIGVVTALLSAAGLF, and LAGGVVLIGLGFKILLEHLVL.

This sequence belongs to the MntP (TC 9.B.29) family.

It localises to the cell inner membrane. Its function is as follows. Probably functions as a manganese efflux pump. This Sorangium cellulosum (strain So ce56) (Polyangium cellulosum (strain So ce56)) protein is Putative manganese efflux pump MntP.